The chain runs to 1571 residues: Pentafunctional AROM polypeptide (1571 aa).

Positions 1 to 384 (MEQPTTIQIL…HEQKASVVSN (384 aa)) are 3-dehydroquinate synthase. NAD(+) contacts are provided by residues 44 to 46 (DTN), 81 to 84 (ESSK), 114 to 116 (GGV), and aspartate 119. Arginine 130 lines the 7-phospho-2-dehydro-3-deoxy-D-arabino-heptonate pocket. An NAD(+)-binding site is contributed by 139–140 (TT). Residues aspartate 146 and lysine 152 each coordinate 7-phospho-2-dehydro-3-deoxy-D-arabino-heptonate. Position 161 (lysine 161) interacts with NAD(+). Asparagine 162 provides a ligand contact to 7-phospho-2-dehydro-3-deoxy-D-arabino-heptonate. Residues 179 to 182 (FLNT) and asparagine 190 contribute to the NAD(+) site. Glutamate 194 serves as a coordination point for Zn(2+). 7-phospho-2-dehydro-3-deoxy-D-arabino-heptonate is bound by residues 194 to 197 (EVIK) and lysine 250. Catalysis depends on glutamate 260, which acts as the Proton acceptor; for 3-dehydroquinate synthase activity. Residues 264–268 (RNLLN) and histidine 271 each bind 7-phospho-2-dehydro-3-deoxy-D-arabino-heptonate. Histidine 271 serves as a coordination point for Zn(2+). The active-site Proton acceptor; for 3-dehydroquinate synthase activity is histidine 275. 2 residues coordinate 7-phospho-2-dehydro-3-deoxy-D-arabino-heptonate: histidine 287 and lysine 356. Histidine 287 contacts Zn(2+). Residues 397-843 (VLPGIPKPLN…WDALAQTFKV (447 aa)) are EPSP synthase. Cysteine 825 serves as the catalytic For EPSP synthase activity. The interval 866-1057 (ASIFIIGMRG…KKKDHSFFVS (192 aa)) is shikimate kinase. Position 872-879 (872-879 (GMRGAGKT)) interacts with ATP. A 3-dehydroquinase region spans residues 1058–1278 (LTLPDLQLSA…AAPGQVSAKD (221 aa)). The active-site Proton acceptor; for 3-dehydroquinate dehydratase activity is the histidine 1181. Lysine 1209 functions as the Schiff-base intermediate with substrate; for 3-dehydroquinate dehydratase activity in the catalytic mechanism. Residues 1291 to 1571 (AKKFALFGKP…EDARAAVMNI (281 aa)) form a shikimate dehydrogenase region.

In the N-terminal section; belongs to the sugar phosphate cyclases superfamily. Dehydroquinate synthase family. The protein in the 2nd section; belongs to the EPSP synthase family. It in the 3rd section; belongs to the shikimate kinase family. This sequence in the 4th section; belongs to the type-I 3-dehydroquinase family. In the C-terminal section; belongs to the shikimate dehydrogenase family. As to quaternary structure, homodimer. It depends on Zn(2+) as a cofactor.

Its subcellular location is the cytoplasm. The enzyme catalyses 7-phospho-2-dehydro-3-deoxy-D-arabino-heptonate = 3-dehydroquinate + phosphate. The catalysed reaction is 3-dehydroquinate = 3-dehydroshikimate + H2O. It carries out the reaction shikimate + NADP(+) = 3-dehydroshikimate + NADPH + H(+). It catalyses the reaction shikimate + ATP = 3-phosphoshikimate + ADP + H(+). The enzyme catalyses 3-phosphoshikimate + phosphoenolpyruvate = 5-O-(1-carboxyvinyl)-3-phosphoshikimate + phosphate. The protein operates within metabolic intermediate biosynthesis; chorismate biosynthesis; chorismate from D-erythrose 4-phosphate and phosphoenolpyruvate: step 2/7. It functions in the pathway metabolic intermediate biosynthesis; chorismate biosynthesis; chorismate from D-erythrose 4-phosphate and phosphoenolpyruvate: step 3/7. Its pathway is metabolic intermediate biosynthesis; chorismate biosynthesis; chorismate from D-erythrose 4-phosphate and phosphoenolpyruvate: step 4/7. It participates in metabolic intermediate biosynthesis; chorismate biosynthesis; chorismate from D-erythrose 4-phosphate and phosphoenolpyruvate: step 5/7. The protein operates within metabolic intermediate biosynthesis; chorismate biosynthesis; chorismate from D-erythrose 4-phosphate and phosphoenolpyruvate: step 6/7. In terms of biological role, the AROM polypeptide catalyzes 5 consecutive enzymatic reactions in prechorismate polyaromatic amino acid biosynthesis. In Arthroderma otae (strain ATCC MYA-4605 / CBS 113480) (Microsporum canis), this protein is Pentafunctional AROM polypeptide.